A 372-amino-acid chain; its full sequence is Virion morphogenesis protein OPG132 (372 aa).

It belongs to the orthopoxvirus OPG132 family.

It is found in the host cytoplasm. Its subcellular location is the virion. Functionally, lipid-bound viral membrane assembly protein that plays an essential role in immature virion (IV) to mature virion (MV) transition. Functions in both crescent-shaped viral membranes formation and its enclosure to form immature virions. In addition, participates in targeting mature virion proteins to sites of virion assembly to ensure their correct localization. The sequence is that of Virion morphogenesis protein OPG132 (OPG132) from Homo sapiens (Human).